We begin with the raw amino-acid sequence, 203 residues long: Small ribosomal subunit protein uS4 (203 aa).

In terms of domain architecture, S4 RNA-binding spans 93–156 (TRLDNLVFRL…QNLAIVNEAI (64 aa)).

This sequence belongs to the universal ribosomal protein uS4 family. Part of the 30S ribosomal subunit. Contacts protein S5. The interaction surface between S4 and S5 is involved in control of translational fidelity.

Its function is as follows. One of the primary rRNA binding proteins, it binds directly to 16S rRNA where it nucleates assembly of the body of the 30S subunit. Functionally, with S5 and S12 plays an important role in translational accuracy. The polypeptide is Small ribosomal subunit protein uS4 (Lacticaseibacillus casei (strain BL23) (Lactobacillus casei)).